The following is a 410-amino-acid chain: LL-diaminopimelate aminotransferase (410 aa).

2 residues coordinate substrate: Tyr15 and Gly42. Pyridoxal 5'-phosphate contacts are provided by residues Tyr72, 108–109, Tyr132, Asn186, Tyr217, and 245–247; these read TK and SFS. 3 residues coordinate substrate: Lys109, Tyr132, and Asn186. The residue at position 248 (Lys248) is an N6-(pyridoxal phosphate)lysine. Arg256 and Asn291 together coordinate pyridoxal 5'-phosphate. Substrate-binding residues include Asn291 and Arg387.

The protein belongs to the class-I pyridoxal-phosphate-dependent aminotransferase family. LL-diaminopimelate aminotransferase subfamily. As to quaternary structure, homodimer. It depends on pyridoxal 5'-phosphate as a cofactor.

The catalysed reaction is (2S,6S)-2,6-diaminopimelate + 2-oxoglutarate = (S)-2,3,4,5-tetrahydrodipicolinate + L-glutamate + H2O + H(+). Its pathway is amino-acid biosynthesis; L-lysine biosynthesis via DAP pathway; LL-2,6-diaminopimelate from (S)-tetrahydrodipicolinate (aminotransferase route): step 1/1. In terms of biological role, involved in the synthesis of meso-diaminopimelate (m-DAP or DL-DAP), required for both lysine and peptidoglycan biosynthesis. Catalyzes the direct conversion of tetrahydrodipicolinate to LL-diaminopimelate. This chain is LL-diaminopimelate aminotransferase, found in Lawsonia intracellularis (strain PHE/MN1-00).